The primary structure comprises 250 residues: Ribonucleotide monophosphatase NagD (250 aa).

Mg(2+) contacts are provided by D9 and D11. Residue D11 is part of the active site. Substrate contacts are provided by residues D11, T42 to N43, and K176. D201 is a binding site for Mg(2+). A substrate-binding site is contributed by N202–T205.

This sequence belongs to the HAD-like hydrolase superfamily. NagD family. In terms of assembly, monomer. Mg(2+) is required as a cofactor. The cofactor is Mn(2+). It depends on Co(2+) as a cofactor. Requires Zn(2+) as cofactor.

The enzyme catalyses a ribonucleoside 5'-phosphate + H2O = a ribonucleoside + phosphate. Functionally, catalyzes the dephosphorylation of an unusually broad range of substrate including deoxyribo- and ribonucleoside tri-, di-, and monophosphates, as well as polyphosphate and glucose-1-P (Glu1P). The polypeptide is Ribonucleotide monophosphatase NagD (nagD) (Escherichia coli O157:H7).